A 451-amino-acid polypeptide reads, in one-letter code: tRNA modification GTPase MnmE (451 aa).

(6S)-5-formyl-5,6,7,8-tetrahydrofolate contacts are provided by Arg-25, Glu-82, and Lys-121. One can recognise a TrmE-type G domain in the interval 217 to 374; that stretch reads GMSVVILGRP…LKQHLKTEMG (158 aa). K(+) is bound at residue Asn-227. Residues 227–232, 246–252, and 271–274 each bind GTP; these read NAGKSS, TDIAGTT, and DTAG. Residue Ser-231 coordinates Mg(2+). Residues Thr-246, Ile-248, and Thr-251 each contribute to the K(+) site. Thr-252 is a Mg(2+) binding site. Position 451 (Lys-451) interacts with (6S)-5-formyl-5,6,7,8-tetrahydrofolate.

Belongs to the TRAFAC class TrmE-Era-EngA-EngB-Septin-like GTPase superfamily. TrmE GTPase family. As to quaternary structure, homodimer. Heterotetramer of two MnmE and two MnmG subunits. K(+) serves as cofactor.

The protein localises to the cytoplasm. Functionally, exhibits a very high intrinsic GTPase hydrolysis rate. Involved in the addition of a carboxymethylaminomethyl (cmnm) group at the wobble position (U34) of certain tRNAs, forming tRNA-cmnm(5)s(2)U34. The chain is tRNA modification GTPase MnmE from Hydrogenovibrio crunogenus (strain DSM 25203 / XCL-2) (Thiomicrospira crunogena).